Reading from the N-terminus, the 177-residue chain is Acireductone dioxygenase (177 aa).

4 residues coordinate Fe(2+): His-99, His-101, Glu-105, and His-143. His-99, His-101, Glu-105, and His-143 together coordinate Ni(2+).

This sequence belongs to the acireductone dioxygenase (ARD) family. As to quaternary structure, monomer. Fe(2+) serves as cofactor. Ni(2+) is required as a cofactor.

The catalysed reaction is 1,2-dihydroxy-5-(methylsulfanyl)pent-1-en-3-one + O2 = 3-(methylsulfanyl)propanoate + CO + formate + 2 H(+). It catalyses the reaction 1,2-dihydroxy-5-(methylsulfanyl)pent-1-en-3-one + O2 = 4-methylsulfanyl-2-oxobutanoate + formate + 2 H(+). It participates in amino-acid biosynthesis; L-methionine biosynthesis via salvage pathway; L-methionine from S-methyl-5-thio-alpha-D-ribose 1-phosphate: step 5/6. Catalyzes 2 different reactions between oxygen and the acireductone 1,2-dihydroxy-3-keto-5-methylthiopentene (DHK-MTPene) depending upon the metal bound in the active site. Fe-containing acireductone dioxygenase (Fe-ARD) produces formate and 2-keto-4-methylthiobutyrate (KMTB), the alpha-ketoacid precursor of methionine in the methionine recycle pathway. Ni-containing acireductone dioxygenase (Ni-ARD) produces methylthiopropionate, carbon monoxide and formate, and does not lie on the methionine recycle pathway. In Leptospira interrogans serogroup Icterohaemorrhagiae serovar copenhageni (strain Fiocruz L1-130), this protein is Acireductone dioxygenase.